The sequence spans 395 residues: Guanine nucleotide-binding protein subunit beta-5 (395 aa).

WD repeat units follow at residues 103–142, 145–184, 193–234, 236–278, 279–318, 320–362, and 365–394; these read GHGN…KEHA, MPCT…NENM, MHTN…QSFH, HGAD…QAFE, THES…EVAI, SKES…RVSI, and GHEN…LRVW.

The protein belongs to the WD repeat G protein beta family. As to quaternary structure, component of a complex composed of RGS9 (isoform RGS9-1), GNB5 and RGS9BP; within this complex, the presence of GNB5 stabilizes both itself and RGS9 and increases RGS9 GTPase-activating protein (GAP) activity. Interacts with RGS7, forming the RGS7-GNB5 complex; within this complex, the presence of GNB5 increases RGS7 GTPase-activating protein (GAP) activity. Interacts with GPR158; promotes the GTPase activator activity of the RGS7-GNB5 complex in absence of glycine, in contrast GTPase activator activity of the RGS7-GNB5 complex is inhibited in presence of glycine. Interacts with RGS6. In terms of tissue distribution, widely expressed.

Its subcellular location is the membrane. In terms of biological role, enhances GTPase-activating protein (GAP) activity of regulator of G protein signaling (RGS) proteins, such as RGS7 and RGS9, hence involved in the termination of the signaling initiated by the G protein coupled receptors (GPCRs) by accelerating the GTP hydrolysis on the G-alpha subunits, thereby promoting their inactivation. Increases RGS7 GTPase-activating protein (GAP) activity, thereby regulating mood and cognition. Increases RGS9 GTPase-activating protein (GAP) activity, hence contributes to the deactivation of G protein signaling initiated by D(2) dopamine receptors. May play an important role in neuronal signaling, including in the parasympathetic, but not sympathetic, control of heart rate. This chain is Guanine nucleotide-binding protein subunit beta-5 (GNB5), found in Homo sapiens (Human).